The chain runs to 419 residues: Ribosome biogenesis protein WDR12 homolog (419 aa).

The segment at 10–91 is ubiquitin-like (UBL) domain; that stretch reads VQVHLKTKQE…EDAIDIEYVE (82 aa). WD repeat units follow at residues 103–140, 142–184, 191–230, 249–287, 289–328, 334–374, and 378–416; these read LHDD…KLTI, GHTA…NAVE, GHER…TSEG, GHRE…IKTE, STNK…GSVV, GHNA…APLY, and GHGE…IENM.

Belongs to the WD repeat WDR12/YTM1 family.

The protein resides in the nucleus. It localises to the nucleolus. It is found in the nucleoplasm. In terms of biological role, required for maturation of ribosomal RNAs and formation of the large ribosomal subunit. The protein is Ribosome biogenesis protein WDR12 homolog of Drosophila virilis (Fruit fly).